A 576-amino-acid polypeptide reads, in one-letter code: Arginine--tRNA ligase (576 aa).

The 'HIGH' region motif lies at 122-132 (PNVAKEMHVGH).

This sequence belongs to the class-I aminoacyl-tRNA synthetase family. Monomer.

The protein localises to the cytoplasm. It catalyses the reaction tRNA(Arg) + L-arginine + ATP = L-arginyl-tRNA(Arg) + AMP + diphosphate. This is Arginine--tRNA ligase from Erwinia tasmaniensis (strain DSM 17950 / CFBP 7177 / CIP 109463 / NCPPB 4357 / Et1/99).